A 536-amino-acid chain; its full sequence is G-protein coupled receptor Mth2 (536 aa).

Residues M1 to N210 lie on the Extracellular side of the membrane. 5 disulfide bridges follow: C17–C71, C73–C78, C82–C177, C83–C96, and C138–C197. N-linked (GlcNAc...) asparagine glycosylation is found at N24 and N33. N-linked (GlcNAc...) asparagine glycans are attached at residues N103, N113, N118, N159, N184, and N203. Residues A211 to I231 traverse the membrane as a helical segment. Residues P232–S241 lie on the Cytoplasmic side of the membrane. The chain crosses the membrane as a helical span at residues L242–Y262. The Extracellular portion of the chain corresponds to Q263–V273. Residues F274–F294 traverse the membrane as a helical segment. At D295–R314 the chain is on the cytoplasmic side. The helical transmembrane segment at F315 to I335 threads the bilayer. At A336 to A365 the chain is on the extracellular side. Residues M366–M386 traverse the membrane as a helical segment. Residues T387–K417 are Cytoplasmic-facing. The chain crosses the membrane as a helical span at residues F418–S438. The Extracellular portion of the chain corresponds to Y439–K449. A helical membrane pass occupies residues L450–V470. Residues M471–R536 lie on the Cytoplasmic side of the membrane. Residues R487–V506 form a disordered region. Residues Q492–S505 are compositionally biased toward low complexity.

It belongs to the G-protein coupled receptor 2 family. Mth subfamily. As to quaternary structure, homodimer.

The protein resides in the cell membrane. In terms of biological role, involved in biological aging and stress response. Essential for adult survival. This Drosophila yakuba (Fruit fly) protein is G-protein coupled receptor Mth2 (mth2).